A 333-amino-acid chain; its full sequence is Pollen allergen KBG 41 (333 aa).

The N-terminal stretch at Met1–Ser23 is a signal peptide. Tandem repeats lie at residues Thr309 to Lys320 and Thr321 to Lys332. The interval Thr309 to Lys332 is 2 X 12 AA tandem repeats.

Belongs to the Poa p IX/Phl p VI allergen family. In terms of tissue distribution, pollen.

The protein is Pollen allergen KBG 41 of Poa pratensis (Kentucky bluegrass).